We begin with the raw amino-acid sequence, 269 residues long: 4-hydroxy-tetrahydrodipicolinate reductase (269 aa).

Residues 10–15, Glu36, 99–101, and 123–126 contribute to the NAD(+) site; these read GANGRM, GTT, and AANF. His156 acts as the Proton donor/acceptor in catalysis. (S)-2,3,4,5-tetrahydrodipicolinate is bound at residue His157. Catalysis depends on Lys160, which acts as the Proton donor. 166-167 contacts (S)-2,3,4,5-tetrahydrodipicolinate; the sequence is GT.

Belongs to the DapB family.

It is found in the cytoplasm. It carries out the reaction (S)-2,3,4,5-tetrahydrodipicolinate + NAD(+) + H2O = (2S,4S)-4-hydroxy-2,3,4,5-tetrahydrodipicolinate + NADH + H(+). The catalysed reaction is (S)-2,3,4,5-tetrahydrodipicolinate + NADP(+) + H2O = (2S,4S)-4-hydroxy-2,3,4,5-tetrahydrodipicolinate + NADPH + H(+). The protein operates within amino-acid biosynthesis; L-lysine biosynthesis via DAP pathway; (S)-tetrahydrodipicolinate from L-aspartate: step 4/4. Its function is as follows. Catalyzes the conversion of 4-hydroxy-tetrahydrodipicolinate (HTPA) to tetrahydrodipicolinate. This is 4-hydroxy-tetrahydrodipicolinate reductase from Neisseria meningitidis serogroup A / serotype 4A (strain DSM 15465 / Z2491).